We begin with the raw amino-acid sequence, 291 residues long: Beta-lactamase Toho-1 (291 aa).

An N-terminal signal peptide occupies residues 1–29 (MMTQSIRRSMLTVMATLPLLFSSATLHAQ). Residue S73 is the Acyl-ester intermediate of the active site. 237–239 (KTG) provides a ligand contact to substrate.

The protein belongs to the class-A beta-lactamase family. Monomer.

The catalysed reaction is a beta-lactam + H2O = a substituted beta-amino acid. In terms of biological role, has strong cefotaxime-hydrolyzing activity. The polypeptide is Beta-lactamase Toho-1 (bla) (Escherichia coli).